We begin with the raw amino-acid sequence, 125 residues long: uncharacterized protein (125 aa).

This is an uncharacterized protein from Escherichia coli (strain K12).